The following is a 222-amino-acid chain: tRNA (guanine-N(1)-)-methyltransferase (222 aa).

Residues glycine 111 and 131–136 contribute to the S-adenosyl-L-methionine site; that span reads LGNYVI.

It belongs to the RNA methyltransferase TrmD family. Homodimer.

It is found in the cytoplasm. The catalysed reaction is guanosine(37) in tRNA + S-adenosyl-L-methionine = N(1)-methylguanosine(37) in tRNA + S-adenosyl-L-homocysteine + H(+). In terms of biological role, specifically methylates guanosine-37 in various tRNAs. The sequence is that of tRNA (guanine-N(1)-)-methyltransferase from Leptospira borgpetersenii serovar Hardjo-bovis (strain JB197).